A 485-amino-acid chain; its full sequence is Keratin, type I cytoskeletal 14 (485 aa).

Over residues 1–15 (MATCSRQFTSSSSMK) the composition is skewed to polar residues. Residues 1-21 (MATCSRQFTSSSSMKGSCGIG) are disordered. A head region spans residues 1–121 (MATCSRQFTS…GLGDGLLVGS (121 aa)). Residues 122 to 157 (EKVTMQNLNDRLATYLDKVRALEEANSDLEVKIRDW) form a coil 1A region. The 312-residue stretch at 122-433 (EKVTMQNLND…RLLEGEDAHL (312 aa)) folds into the IF rod domain. The tract at residues 158 to 175 (YQRQRPTEIKDYSPYFKT) is linker 1. The tract at residues 176–267 (IEDLKSKILA…KNHEEEMASM (92 aa)) is coil 1B. Positions 268–290 (RGQVGGDVNVEMDAAPGVDLSRI) are linker 12. Residues 291 to 429 (LNEMRDQYEK…ATYRRLLEGE (139 aa)) are coil 2. The interval 430-485 (DAHLSSAQFSSSSQFSSGSQSSRDVTSTNRQIRTKVMDVHDGKVVSTHEQVLRTKN) is tail. The segment at 432–485 (HLSSAQFSSSSQFSSGSQSSRDVTSTNRQIRTKVMDVHDGKVVSTHEQVLRTKN) is interaction with Type I keratins and keratin filaments. Over residues 437-451 (QFSSSSQFSSGSQSS) the composition is skewed to low complexity. A disordered region spans residues 437–458 (QFSSSSQFSSGSQSSRDVTSTN). Ser448 carries the phosphoserine modification.

Belongs to the intermediate filament family. Heterotetramer of two type I and two type II keratins. Forms a disulfide-linked heterodimer (via 2B domains) with KRT5 (via 2B domains). Forms a heterodimer with KRT1; the interaction is more abundant in the absence of KRT5. Interacts with TRADD and with keratin filaments. Associates with other type I keratins. Interacts with EPPK1. Interacts with KLHL24. Interacts with PKP1 (via N-terminus) and PKP2. A disulfide bond is formed between rather than within filaments and promotes the formation of a keratin filament cage around the nucleus. In terms of processing, ubiquitinated by the BCR(KLHL24) E3 ubiquitin ligase complex. As to expression, expressed in most cells of squamous cell carcinomas, in spinous and suprabasal cells around the branching papillary region of papillomas, and weakly in a few proliferative cells of hyperplastic tissue.

The protein localises to the cytoplasm. The protein resides in the nucleus. Functionally, the nonhelical tail domain is involved in promoting KRT5-KRT14 filaments to self-organize into large bundles and enhances the mechanical properties involved in resilience of keratin intermediate filaments in vitro. This Rattus norvegicus (Rat) protein is Keratin, type I cytoskeletal 14 (Krt14).